An 86-amino-acid chain; its full sequence is ATP synthase subunit c (86 aa).

2 consecutive transmembrane segments (helical) span residues 13 to 33 (FFAT…AGLA) and 63 to 83 (ILGQ…AFIL).

Belongs to the ATPase C chain family. F-type ATPases have 2 components, F(1) - the catalytic core - and F(0) - the membrane proton channel. F(1) has five subunits: alpha(3), beta(3), gamma(1), delta(1), epsilon(1). F(0) has three main subunits: a(1), b(2) and c(10-14). The alpha and beta chains form an alternating ring which encloses part of the gamma chain. F(1) is attached to F(0) by a central stalk formed by the gamma and epsilon chains, while a peripheral stalk is formed by the delta and b chains.

The protein localises to the cell membrane. Functionally, f(1)F(0) ATP synthase produces ATP from ADP in the presence of a proton or sodium gradient. F-type ATPases consist of two structural domains, F(1) containing the extramembraneous catalytic core and F(0) containing the membrane proton channel, linked together by a central stalk and a peripheral stalk. During catalysis, ATP synthesis in the catalytic domain of F(1) is coupled via a rotary mechanism of the central stalk subunits to proton translocation. Its function is as follows. Key component of the F(0) channel; it plays a direct role in translocation across the membrane. A homomeric c-ring of between 10-14 subunits forms the central stalk rotor element with the F(1) delta and epsilon subunits. This chain is ATP synthase subunit c, found in Acholeplasma laidlawii (strain PG-8A).